A 327-amino-acid chain; its full sequence is MQFIDQANIILKAGKGGNGIVSFRREKFVPAGGPSGGNGGRGGSVILIADNNLQTLLDFKFKREIIAKDGCKGGPNKRSGASGEDTILKVPCGTEIRDIKTGIILGDLTKHKESLTIAIGGRGGHGNAYYLSNQNRAPESFTEGKDGEIWEVQLELKLLAEVGIIGLPNAGKSTLISVLSSARPKIANYPFTTLIPNLGVVRKIDGNGCLFADIPGLISGAADGVGLGHDFLRHIQRTKILLHLIDSIAENPLHDFEIIEQELQKYGKGLLDKERIIVLNKMELVDDDYLKIITKKLEDLSKRKVLVISSSLKKGLSSLLSEVWKRI.

An Obg domain is found at 1–159 (MQFIDQANII…WEVQLELKLL (159 aa)). Residues 160–327 (AEVGIIGLPN…SLLSEVWKRI (168 aa)) enclose the OBG-type G domain. ATP is bound by residues 166–173 (GLPNAGKS), 191–195 (FTTLI), 213–216 (DIPG), 280–283 (NKME), and 309–311 (SSS). Ser-173 and Thr-193 together coordinate Mg(2+).

Belongs to the TRAFAC class OBG-HflX-like GTPase superfamily. OBG GTPase family. As to quaternary structure, monomer. It depends on Mg(2+) as a cofactor.

Its subcellular location is the cytoplasm. Its function is as follows. An essential GTPase which binds GTP, GDP and possibly (p)ppGpp with moderate affinity, with high nucleotide exchange rates and a fairly low GTP hydrolysis rate. Plays a role in control of the cell cycle, stress response, ribosome biogenesis and in those bacteria that undergo differentiation, in morphogenesis control. This Prochlorococcus marinus (strain MIT 9215) protein is GTPase Obg.